The sequence spans 191 residues: Elongation factor P (191 aa).

Lysine 34 carries the N6-(3,6-diaminohexanoyl)-5-hydroxylysine modification.

Belongs to the elongation factor P family. May be beta-lysylated on the epsilon-amino group of Lys-34 by the combined action of EpmA and EpmB, and then hydroxylated on the C5 position of the same residue by EpmC (if this protein is present). Lysylation is critical for the stimulatory effect of EF-P on peptide-bond formation. The lysylation moiety may extend toward the peptidyltransferase center and stabilize the terminal 3-CCA end of the tRNA. Hydroxylation of the C5 position on Lys-34 may allow additional potential stabilizing hydrogen-bond interactions with the P-tRNA.

It localises to the cytoplasm. It participates in protein biosynthesis; polypeptide chain elongation. Functionally, involved in peptide bond synthesis. Alleviates ribosome stalling that occurs when 3 or more consecutive Pro residues or the sequence PPG is present in a protein, possibly by augmenting the peptidyl transferase activity of the ribosome. Modification of Lys-34 is required for alleviation. The sequence is that of Elongation factor P from Psychrobacter sp. (strain PRwf-1).